A 215-amino-acid polypeptide reads, in one-letter code: Cytochrome b6 (215 aa).

A helical membrane pass occupies residues 32 to 52; the sequence is IFYCLGGITLTCFLVQVATGF. Cys35 is a heme c binding site. Residues His86 and His100 each contribute to the heme b site. The next 3 helical transmembrane spans lie at 90 to 110, 116 to 136, and 186 to 206; these read ASMM…TGGF, LTWV…VTGY, and LHTF…FLMI. Heme b-binding residues include His187 and His202.

The protein belongs to the cytochrome b family. PetB subfamily. In terms of assembly, the 4 large subunits of the cytochrome b6-f complex are cytochrome b6, subunit IV (17 kDa polypeptide, PetD), cytochrome f and the Rieske protein, while the 4 small subunits are PetG, PetL, PetM and PetN. The complex functions as a dimer. Heme b serves as cofactor. Requires heme c as cofactor.

The protein resides in the plastid. It is found in the chloroplast thylakoid membrane. Functionally, component of the cytochrome b6-f complex, which mediates electron transfer between photosystem II (PSII) and photosystem I (PSI), cyclic electron flow around PSI, and state transitions. The polypeptide is Cytochrome b6 (Marchantia polymorpha (Common liverwort)).